The chain runs to 480 residues: DnaJ homolog subfamily A member 3, mitochondrial (480 aa).

Position 58 is an omega-N-methylarginine; by CARM1 (arginine 58). Positions 93-158 (DYYQILGVPR…VKRKQYDAYG (66 aa)) constitute a J domain. An N6-acetyllysine modification is found at lysine 134. A CR-type zinc finger spans residues 223–301 (GVNKEFTVNI…CRGAGQAKQK (79 aa)). Zn(2+) is bound at residue cysteine 236. 4 CXXCXGXG motif repeats span residues 236–243 (CERCNGKG), 253–260 (CHYCGGSG), 275–282 (CRRCGGRG), and 289–296 (CVVCRGAG). Arginine 238 bears the Omega-N-methylarginine; by CARM1 mark. Residues cysteine 239, cysteine 253, cysteine 256, cysteine 275, cysteine 278, cysteine 289, and cysteine 292 each coordinate Zn(2+). An Omega-N-methylarginine; by CARM1 modification is found at arginine 293. Serine 398 carries the post-translational modification Phosphoserine. The span at 443–456 (LTSSGGSTMDSSAG) shows a compositional bias: polar residues. The tract at residues 443 to 471 (LTSSGGSTMDSSAGSKARREAGEDEEGFL) is disordered.

In terms of assembly, interacts with JAK2, HSPA9B and IFN-gammaR2 chain. Interacts with Ras GTPase-activating protein 1 (RASA1). Isoform 2 interacts with MUSK (via the cytoplasmic domain). In terms of processing, tyrosine phosphorylated. Widely expressed with highest levels in heart, liver, lung and skeletal muscles. Also expressed in keratinocytes; expression level and distribution is altered in basal cell carcinomas.

The protein localises to the mitochondrion matrix. Its subcellular location is the cytoplasm. The protein resides in the cytosol. It is found in the postsynaptic cell membrane. Its function is as follows. Modulates apoptotic signal transduction or effector structures within the mitochondrial matrix. Affect cytochrome C release from the mitochondria and caspase 3 activation, but not caspase 8 activation. Isoform 1 increases apoptosis triggered by both TNF and the DNA-damaging agent mytomycin C; in sharp contrast, isoform 2 suppresses apoptosis. Can modulate IFN-gamma-mediated transcriptional activity. Isoform 2 may play a role in neuromuscular junction development as an effector of the MUSK signaling pathway. The polypeptide is DnaJ homolog subfamily A member 3, mitochondrial (DNAJA3) (Homo sapiens (Human)).